The chain runs to 137 residues: Nucleoside diphosphate kinase (137 aa).

Residues lysine 9, phenylalanine 57, arginine 85, threonine 91, arginine 102, and asparagine 112 each coordinate ATP. The active-site Pros-phosphohistidine intermediate is histidine 115.

It belongs to the NDK family. In terms of assembly, homotetramer. Mg(2+) serves as cofactor.

The protein localises to the cytoplasm. The enzyme catalyses a 2'-deoxyribonucleoside 5'-diphosphate + ATP = a 2'-deoxyribonucleoside 5'-triphosphate + ADP. It catalyses the reaction a ribonucleoside 5'-diphosphate + ATP = a ribonucleoside 5'-triphosphate + ADP. Functionally, major role in the synthesis of nucleoside triphosphates other than ATP. The ATP gamma phosphate is transferred to the NDP beta phosphate via a ping-pong mechanism, using a phosphorylated active-site intermediate. In Leptospira borgpetersenii serovar Hardjo-bovis (strain L550), this protein is Nucleoside diphosphate kinase.